Consider the following 207-residue polypeptide: MARYTGPKAKLSRREGTDLFLKSARRSLADKCKLDSKPGQHGRTSGARTSDYGNQLREKQKVKRIYGVLERQFRRYFAEADRRKGNTGEKLLQLLESRLDNVVYRMGFGSTRAEARQLVSHKAILVNGQTLNVPSAQIKSGDVITIREQSKKQVRIAEALSLAEQSGFPTWVAVDAKKFEGTFKQVPDRADISGDINESLIVELYSR.

A disordered region spans residues 33-54 (KLDSKPGQHGRTSGARTSDYGN). Residues 42–53 (GRTSGARTSDYG) are compositionally biased toward polar residues. An S4 RNA-binding domain is found at 97–160 (SRLDNVVYRM…KKQVRIAEAL (64 aa)).

The protein belongs to the universal ribosomal protein uS4 family. As to quaternary structure, part of the 30S ribosomal subunit. Contacts protein S5. The interaction surface between S4 and S5 is involved in control of translational fidelity.

In terms of biological role, one of the primary rRNA binding proteins, it binds directly to 16S rRNA where it nucleates assembly of the body of the 30S subunit. Functionally, with S5 and S12 plays an important role in translational accuracy. In Cupriavidus pinatubonensis (strain JMP 134 / LMG 1197) (Cupriavidus necator (strain JMP 134)), this protein is Small ribosomal subunit protein uS4.